A 281-amino-acid polypeptide reads, in one-letter code: Large ribosomal subunit protein uL2 (281 aa).

The tract at residues 215–281 (LGRRPHTRGV…RRNNRKDSKK (67 aa)) is disordered. The span at 258–269 (KTRDNKSTDKFI) shows a compositional bias: basic and acidic residues. A compositionally biased stretch (basic residues) spans 270-281 (VRRRNNRKDSKK).

Belongs to the universal ribosomal protein uL2 family. In terms of assembly, part of the 50S ribosomal subunit. Forms a bridge to the 30S subunit in the 70S ribosome.

Its function is as follows. One of the primary rRNA binding proteins. Required for association of the 30S and 50S subunits to form the 70S ribosome, for tRNA binding and peptide bond formation. It has been suggested to have peptidyltransferase activity; this is somewhat controversial. Makes several contacts with the 16S rRNA in the 70S ribosome. The sequence is that of Large ribosomal subunit protein uL2 from Pelagibacter ubique (strain HTCC1062).